Here is a 963-residue protein sequence, read N- to C-terminus: Protein NLP2 (963 aa).

In terms of domain architecture, RWP-RK spans arginine 635–serine 716. The segment covering methionine 734–glutamine 755 has biased composition (polar residues). Residues methionine 734 to asparagine 794 are disordered. Low complexity predominate over residues glycine 756–asparagine 794. Positions alanine 862 to alanine 945 constitute a PB1 domain.

It is found in the nucleus. In terms of biological role, probable transcription factor. This is Protein NLP2 (NLP2) from Arabidopsis thaliana (Mouse-ear cress).